Consider the following 224-residue polypeptide: Large ribosomal subunit protein bL25 (224 aa).

The segment at 190 to 224 (EPAPAAEGAAPAEGAAAAAAGGKPAAKTAKPAAKK) is disordered.

Belongs to the bacterial ribosomal protein bL25 family. CTC subfamily. As to quaternary structure, part of the 50S ribosomal subunit; part of the 5S rRNA/L5/L18/L25 subcomplex. Contacts the 5S rRNA. Binds to the 5S rRNA independently of L5 and L18.

Functionally, this is one of the proteins that binds to the 5S RNA in the ribosome where it forms part of the central protuberance. This is Large ribosomal subunit protein bL25 from Variovorax paradoxus (strain S110).